The following is a 306-amino-acid chain: Ribosomal RNA small subunit methyltransferase H (306 aa).

S-adenosyl-L-methionine is bound by residues 36–38, Asp-56, Phe-80, Asp-97, and Gln-104; that span reads GGH. Positions 280 to 306 are disordered; the sequence is ASEEEVAGNPRSRSAVMRVAERTGEAA.

This sequence belongs to the methyltransferase superfamily. RsmH family.

Its subcellular location is the cytoplasm. It catalyses the reaction cytidine(1402) in 16S rRNA + S-adenosyl-L-methionine = N(4)-methylcytidine(1402) in 16S rRNA + S-adenosyl-L-homocysteine + H(+). Specifically methylates the N4 position of cytidine in position 1402 (C1402) of 16S rRNA. This chain is Ribosomal RNA small subunit methyltransferase H, found in Polaromonas naphthalenivorans (strain CJ2).